The following is a 354-amino-acid chain: Endo-1,4-beta-xylanase 1 (354 aa).

The 321-residue stretch at 19–339 folds into the GH10 domain; sequence SGLDAAMKAA…KPSYTSSLNT (321 aa). Residue Asn-117 is glycosylated (N-linked (GlcNAc...) asparagine). The Proton donor role is filled by Glu-147. Residue Glu-261 is the Nucleophile of the active site. Residues Cys-289 and Cys-295 are joined by a disulfide bond.

It belongs to the glycosyl hydrolase 10 (cellulase F) family.

It is found in the secreted. The catalysed reaction is Endohydrolysis of (1-&gt;4)-beta-D-xylosidic linkages in xylans.. It functions in the pathway glycan degradation; xylan degradation. Endo-1,4-beta-xylanase involved in the hydrolysis of xylan, a major structural heterogeneous polysaccharide found in plant biomass representing the second most abundant polysaccharide in the biosphere, after cellulose. Plays an important role in causing fusarium head blight (FHB) on cereal crops. This Gibberella zeae (strain ATCC MYA-4620 / CBS 123657 / FGSC 9075 / NRRL 31084 / PH-1) (Wheat head blight fungus) protein is Endo-1,4-beta-xylanase 1 (XYL1).